The sequence spans 138 residues: Small ribosomal subunit protein uS11c (138 aa).

The disordered stretch occupies residues 1–22 (MAKAIPKISSRRNGRISSRKGA). Basic residues predominate over residues 9–22 (SSRRNGRISSRKGA).

It belongs to the universal ribosomal protein uS11 family. In terms of assembly, part of the 30S ribosomal subunit.

It localises to the plastid. It is found in the chloroplast. The polypeptide is Small ribosomal subunit protein uS11c (Solanum bulbocastanum (Wild potato)).